The sequence spans 493 residues: Glutamyl-tRNA(Gln) amidotransferase subunit A (493 aa).

Residues Lys78 and Ser158 each act as charge relay system in the active site. The Acyl-ester intermediate role is filled by Ser182.

This sequence belongs to the amidase family. GatA subfamily. As to quaternary structure, heterotrimer of A, B and C subunits.

It carries out the reaction L-glutamyl-tRNA(Gln) + L-glutamine + ATP + H2O = L-glutaminyl-tRNA(Gln) + L-glutamate + ADP + phosphate + H(+). In terms of biological role, allows the formation of correctly charged Gln-tRNA(Gln) through the transamidation of misacylated Glu-tRNA(Gln) in organisms which lack glutaminyl-tRNA synthetase. The reaction takes place in the presence of glutamine and ATP through an activated gamma-phospho-Glu-tRNA(Gln). The sequence is that of Glutamyl-tRNA(Gln) amidotransferase subunit A from Beijerinckia indica subsp. indica (strain ATCC 9039 / DSM 1715 / NCIMB 8712).